A 360-amino-acid polypeptide reads, in one-letter code: Phospho-N-acetylmuramoyl-pentapeptide-transferase (360 aa).

10 helical membrane passes run 27 to 47, 73 to 93, 97 to 117, 145 to 165, 168 to 188, 199 to 219, 236 to 256, 263 to 283, 288 to 308, and 337 to 357; these read ILGVLTALAISLLVGNKVIVL, TMGGALIIFSISVSTLLWGDL, YVWVVLLVMLAFGVVGWVDDY, AFYLYYTASTPAETALIVPLF, VAIPLGMFFIVLTYFVIVGTS, GLAILPTVLVGGALGVFAYLT, SGELLVFCAALAGAGLGFLWF, IFMGDVGSLALGAALGTIAVI, LVLFIMGGVFVMETVSVILQV, and KVIVRFWIITVCLVLVGFATL.

The protein belongs to the glycosyltransferase 4 family. MraY subfamily. Mg(2+) is required as a cofactor.

The protein localises to the cell inner membrane. The catalysed reaction is UDP-N-acetyl-alpha-D-muramoyl-L-alanyl-gamma-D-glutamyl-meso-2,6-diaminopimeloyl-D-alanyl-D-alanine + di-trans,octa-cis-undecaprenyl phosphate = di-trans,octa-cis-undecaprenyl diphospho-N-acetyl-alpha-D-muramoyl-L-alanyl-D-glutamyl-meso-2,6-diaminopimeloyl-D-alanyl-D-alanine + UMP. It participates in cell wall biogenesis; peptidoglycan biosynthesis. Its function is as follows. Catalyzes the initial step of the lipid cycle reactions in the biosynthesis of the cell wall peptidoglycan: transfers peptidoglycan precursor phospho-MurNAc-pentapeptide from UDP-MurNAc-pentapeptide onto the lipid carrier undecaprenyl phosphate, yielding undecaprenyl-pyrophosphoryl-MurNAc-pentapeptide, known as lipid I. The polypeptide is Phospho-N-acetylmuramoyl-pentapeptide-transferase (Marinomonas sp. (strain MWYL1)).